The chain runs to 325 residues: MNSSSTLTVLNLTLNASEDGILGSNVKNKSLACEEMGIAVEVFLTLGLVSLLENILVIGAIVKNKNLHSPMYFFVGSLAVADMLVSMSNAWETVTIYLLNNKHLVIADTFVRHIDNVFDSMICISVVASMCSLLAIAVDRYITIFYALRYHHIMTARRSGVIIACIWTFCISCGIVFIIYYESKYVIICLISMFFTMLFFMVSLYIHMFLLARNHVKRIAASPRYNSVRQRTSMKGAITLTMLLGIFIVCWSPFFLHLILMISCPQNVYCSCFMSYFNMYLILIMCNSVIDPLIYALRSQEMRRTFKEIVCCHGFRRPCRLLGGY.

At Met1 to Gly37 the chain is on the extracellular side. 4 N-linked (GlcNAc...) asparagine glycosylation sites follow: Asn2, Asn11, Asn15, and Asn28. A helical transmembrane segment spans residues Ile38 to Ile61. The Cytoplasmic portion of the chain corresponds to Val62–Phe73. A helical membrane pass occupies residues Phe74 to Tyr97. Topologically, residues Leu98–Ile114 are extracellular. A helical transmembrane segment spans residues Asp115–Val138. Over Asp139–Thr155 the chain is Cytoplasmic. A helical transmembrane segment spans residues Ala156–Ile179. The Extracellular segment spans residues Tyr180–Val186. A helical transmembrane segment spans residues Ile187–Leu211. The Cytoplasmic segment spans residues Ala212 to Thr239. A helical membrane pass occupies residues Leu240–Pro265. Residues Gln266–Phe273 are Extracellular-facing. The helical transmembrane segment at Met274–Leu297 threads the bilayer. Over Arg298–Tyr325 the chain is Cytoplasmic. Residues Cys311 and Cys312 are each lipidated (S-palmitoyl cysteine).

The protein belongs to the G-protein coupled receptor 1 family. Skin, adrenal gland, skeletal muscle, bone marrow, spleen, thymus, gonads, uterus and brain.

It localises to the cell membrane. In terms of biological role, receptor for MSH (alpha, beta and gamma) and ACTH. The activity of this receptor is mediated by G proteins which activate adenylate cyclase. This receptor is a possible mediator of the immunomodulation properties of melanocortins. The sequence is that of Melanocortin receptor 5 (Mc5r) from Mus musculus (Mouse).